Here is a 682-residue protein sequence, read N- to C-terminus: Restriction of telomere capping protein 5 (682 aa).

Disordered stretches follow at residues 167–198 and 331–358; these read LESI…DEDE and RDSQ…PPLS. Positions 344–358 are enriched in pro residues; that stretch reads VPTPPSTPPISPPLS. In terms of domain architecture, TLDc spans 369 to 605; it reads RILNPAVLSH…IYNLEVWGII (237 aa).

It belongs to the RTC5 family.

The protein localises to the cytoplasm. May be involved in a process influencing telomere capping. The chain is Restriction of telomere capping protein 5 (RTC5) from Ajellomyces capsulatus (strain NAm1 / WU24) (Darling's disease fungus).